The chain runs to 275 residues: Shikimate dehydrogenase (NADP(+)) (275 aa).

Shikimate-binding positions include serine 15–serine 17 and threonine 62. Lysine 66 serves as the catalytic Proton acceptor. NADP(+) is bound at residue glutamate 78. Residues asparagine 87 and aspartate 102 each coordinate shikimate. NADP(+) contacts are provided by residues glycine 128–alanine 132, asparagine 151–lysine 156, and leucine 218. Tyrosine 220 serves as a coordination point for shikimate. Glycine 241 is a binding site for NADP(+).

This sequence belongs to the shikimate dehydrogenase family. Homodimer.

It carries out the reaction shikimate + NADP(+) = 3-dehydroshikimate + NADPH + H(+). Its pathway is metabolic intermediate biosynthesis; chorismate biosynthesis; chorismate from D-erythrose 4-phosphate and phosphoenolpyruvate: step 4/7. In terms of biological role, involved in the biosynthesis of the chorismate, which leads to the biosynthesis of aromatic amino acids. Catalyzes the reversible NADPH linked reduction of 3-dehydroshikimate (DHSA) to yield shikimate (SA). The sequence is that of Shikimate dehydrogenase (NADP(+)) from Shouchella clausii (strain KSM-K16) (Alkalihalobacillus clausii).